The primary structure comprises 39 residues: Photosystem II reaction center protein L (39 aa).

The helical transmembrane segment at serine 18–phenylalanine 38 threads the bilayer.

Belongs to the PsbL family. PSII is composed of 1 copy each of membrane proteins PsbA, PsbB, PsbC, PsbD, PsbE, PsbF, PsbH, PsbI, PsbJ, PsbK, PsbL, PsbM, PsbT, PsbX, PsbY, Psb30/Ycf12, peripheral proteins PsbO, CyanoQ (PsbQ), PsbU, PsbV and a large number of cofactors. It forms dimeric complexes.

The protein resides in the cellular thylakoid membrane. Functionally, one of the components of the core complex of photosystem II (PSII). PSII is a light-driven water:plastoquinone oxidoreductase that uses light energy to abstract electrons from H(2)O, generating O(2) and a proton gradient subsequently used for ATP formation. It consists of a core antenna complex that captures photons, and an electron transfer chain that converts photonic excitation into a charge separation. This subunit is found at the monomer-monomer interface and is required for correct PSII assembly and/or dimerization. This is Photosystem II reaction center protein L from Prochlorococcus marinus subsp. pastoris (strain CCMP1986 / NIES-2087 / MED4).